A 553-amino-acid chain; its full sequence is Probable inactive serine/threonine-protein kinase samkD (553 aa).

One can recognise an SAM domain in the interval 24 to 90; the sequence is WDNETVCKWL…FEYQILKNCY (67 aa). Positions 134–393 constitute a Protein kinase domain; it reads YQYIETISKN…SKELLKSFWF (260 aa). ATP-binding positions include 140 to 148 and Lys165; that span reads ISKNKFCEI.

This sequence belongs to the protein kinase superfamily. Ser/Thr protein kinase family.

In Dictyostelium discoideum (Social amoeba), this protein is Probable inactive serine/threonine-protein kinase samkD (samkD).